A 299-amino-acid polypeptide reads, in one-letter code: Glycine--tRNA ligase alpha subunit (299 aa).

The protein belongs to the class-II aminoacyl-tRNA synthetase family. Tetramer of two alpha and two beta subunits.

It localises to the cytoplasm. The enzyme catalyses tRNA(Gly) + glycine + ATP = glycyl-tRNA(Gly) + AMP + diphosphate. The protein is Glycine--tRNA ligase alpha subunit of Desulforapulum autotrophicum (strain ATCC 43914 / DSM 3382 / VKM B-1955 / HRM2) (Desulfobacterium autotrophicum).